Here is a 488-residue protein sequence, read N- to C-terminus: B-type flagellin (488 aa).

The protein belongs to the bacterial flagellin family. Post-translationally, phosphorylated on tyrosine residue(s).

The protein resides in the secreted. It is found in the bacterial flagellum. Flagellin is the subunit protein which polymerizes to form the filaments of bacterial flagella. This is B-type flagellin (fliC) from Pseudomonas aeruginosa (strain ATCC 15692 / DSM 22644 / CIP 104116 / JCM 14847 / LMG 12228 / 1C / PRS 101 / PAO1).